We begin with the raw amino-acid sequence, 378 residues long: Transmembrane 6 superfamily member 2 (378 aa).

10 consecutive transmembrane segments (helical) span residues threonine 10–phenylalanine 30, leucine 34–leucine 54, proline 63–leucine 83, isoleucine 110–alanine 130, leucine 140–isoleucine 160, proline 170–phenylalanine 190, leucine 219–valine 239, methionine 269–phenylalanine 289, glycine 291–phenylalanine 311, and threonine 332–phenylalanine 352. EXPERA domains follow at residues tyrosine 61–glycine 186 and alanine 217–alanine 351.

It belongs to the TM6SF family. In terms of tissue distribution, highly expressed in the liver at both the mRNA and protein levels.

The protein localises to the endoplasmic reticulum membrane. It localises to the endoplasmic reticulum-Golgi intermediate compartment membrane. Its function is as follows. Regulator of liver fat metabolism influencing triglyceride secretion and hepatic lipid droplet content. May function as sterol isomerase. The protein is Transmembrane 6 superfamily member 2 (Tm6sf2) of Mus musculus (Mouse).